A 544-amino-acid polypeptide reads, in one-letter code: Serine/threonine-protein kinase PAK 1 (544 aa).

Residues M1–L77 form a disordered region. S2 is subject to N-acetylserine. Residue S21 is modified to Phosphoserine; by PKB and autocatalysis. A compositionally biased stretch (basic and acidic residues) spans K68–L77. Positions K70 to Q140 are autoregulatory region. The CRIB domain maps to I75–G88. The interval I75–R105 is GTPase-binding. At T84 the chain carries Phosphothreonine; by OXSR1. S115 is modified (phosphoserine). Y131 and Y142 each carry phosphotyrosine. 2 positions are modified to phosphoserine; by autocatalysis: S144 and S149. Y153 bears the Phosphotyrosine; by JAK2 mark. The tract at residues V161 to P193 is disordered. S174 bears the Phosphoserine mark. The span at S174–G183 shows a compositional bias: acidic residues. Position 184 is a phosphothreonine (T184). S198 is subject to Phosphoserine; by autocatalysis. Y200 carries the phosphotyrosine; by JAK2 modification. Residue S203 is modified to Phosphoserine; by autocatalysis. 2 positions are modified to phosphothreonine: T211 and T218. Residues P212 to E250 are disordered. Residues S219 and S222 each carry the phosphoserine modification. A compositionally biased stretch (polar residues) spans S219–P230. Phosphothreonine occurs at positions 224, 228, and 229. A Protein kinase domain is found at Y269–L520. An ATP-binding site is contributed by I275–V283. Position 284 is a phosphotyrosine; by JAK2 (Y284). Residue K298 coordinates ATP. D388 functions as the Proton acceptor in the catalytic mechanism. Phosphothreonine; by autocatalysis, BRSK2 and PDPK1 is present on T422.

This sequence belongs to the protein kinase superfamily. STE Ser/Thr protein kinase family. STE20 subfamily. As to quaternary structure, homodimer in its autoinhibited state. Active as monomer. Interacts with GIT1. Component of cytoplasmic complexes, which also contains PXN, ARHGEF7 and GIT1. Interacts with NISCH. Interacts with DVL1; mediates the formation of a DVL1, MUSK and PAK1 ternary complex involved in AChR clustering. Binds to the caspase-cleaved p110 isoform of CDC2L1 and CDC2L2, p110C, but not the full-length proteins. Interacts with ARHGEF7. Interacts tightly with GTP-bound but not GDP-bound CDC42/P21 and RAC1. Probably found in a ternary complex composed of DSCAM, PAK1 and RAC1. Interacts with DSCAM (via cytoplasmic domain); the interaction is direct and enhanced in presence of RAC1. Interacts with SCRIB. Interacts with PDPK1. Interacts (via kinase domain) with RAF1. Interacts with NCK1 and NCK2. Interacts with TBCB. Interacts with BRSK2. Interacts with SNAI1. Interacts with CIB1 (via N-terminal region); the interaction is direct, promotes PAK1 activity and occurs in a calcium-dependent manner. Interacts with INPP5K. Interacts with gamma-tubulin. Interacts with RHOU; the interaction promotes PAK1 activation. Mg(2+) is required as a cofactor. Autophosphorylated in trans, meaning that in a dimer, one kinase molecule phosphorylates the other one. Activated by autophosphorylation at Thr-422 in response to a conformation change, triggered by interaction with GTP-bound CDC42 or RAC1. Activated by phosphorylation at Thr-422 by BRSK2 and by PDPK1. Phosphorylated by JAK2 in response to PRL; this increases PAK1 kinase activity. Phosphorylated at Ser-21 by PKB/AKT; this reduces interaction with NCK1 and association with focal adhesion sites. Upon DNA damage, phosphorylated at Thr-211 and translocates to the nucleoplasm. Phosphorylated at tyrosine residues, which can be enhanced by NTN1.

It localises to the cytoplasm. The protein resides in the cell junction. It is found in the focal adhesion. The protein localises to the cell projection. Its subcellular location is the lamellipodium. It localises to the cell membrane. The protein resides in the ruffle membrane. It is found in the invadopodium. The protein localises to the nucleus. Its subcellular location is the nucleoplasm. It localises to the chromosome. The protein resides in the cytoskeleton. It is found in the microtubule organizing center. The protein localises to the centrosome. It carries out the reaction L-seryl-[protein] + ATP = O-phospho-L-seryl-[protein] + ADP + H(+). The enzyme catalyses L-threonyl-[protein] + ATP = O-phospho-L-threonyl-[protein] + ADP + H(+). Its activity is regulated as follows. Phosphorylation of Thr-84 by OXSR1 inhibits activation. Activated by binding small G proteins. Binding of GTP-bound CDC42 or RAC1 to the autoregulatory region releases monomers from the autoinhibited dimer, and enables activation by phosphorylation of Thr-422. Functionally, protein kinase involved in intracellular signaling pathways downstream of integrins and receptor-type kinases that plays an important role in cytoskeleton dynamics, in cell adhesion, migration, proliferation, apoptosis, mitosis, and in vesicle-mediated transport processes. Can directly phosphorylate BAD and protects cells against apoptosis. Activated by interaction with CDC42 and RAC1. Functions as a GTPase effector that links the Rho-related GTPases CDC42 and RAC1 to the JNK MAP kinase pathway. Phosphorylates and activates MAP2K1, and thereby mediates activation of downstream MAP kinases. Involved in the reorganization of the actin cytoskeleton, actin stress fibers and of focal adhesion complexes. Phosphorylates the tubulin chaperone TBCB and thereby plays a role in the regulation of microtubule biogenesis and organization of the tubulin cytoskeleton. Plays a role in the regulation of insulin secretion in response to elevated glucose levels. Part of a ternary complex that contains PAK1, DVL1 and MUSK that is important for MUSK-dependent regulation of AChR clustering during the formation of the neuromuscular junction (NMJ). Activity is inhibited in cells undergoing apoptosis, potentially due to binding of CDC2L1 and CDC2L2. Phosphorylates MYL9/MLC2. Phosphorylates RAF1 at 'Ser-338' and 'Ser-339' resulting in: activation of RAF1, stimulation of RAF1 translocation to mitochondria, phosphorylation of BAD by RAF1, and RAF1 binding to BCL2. Phosphorylates SNAI1 at 'Ser-246' promoting its transcriptional repressor activity by increasing its accumulation in the nucleus. In podocytes, promotes NR3C2 nuclear localization. Required for atypical chemokine receptor ACKR2-induced phosphorylation of LIMK1 and cofilin (CFL1) and for the up-regulation of ACKR2 from endosomal compartment to cell membrane, increasing its efficiency in chemokine uptake and degradation. In synapses, seems to mediate the regulation of F-actin cluster formation performed by SHANK3, maybe through CFL1 phosphorylation and inactivation. Plays a role in RUFY3-mediated facilitating gastric cancer cells migration and invasion. In response to DNA damage, phosphorylates MORC2 which activates its ATPase activity and facilitates chromatin remodeling. In neurons, plays a crucial role in regulating GABA(A) receptor synaptic stability and hence GABAergic inhibitory synaptic transmission through its role in F-actin stabilization. In hippocampal neurons, necessary for the formation of dendritic spines and excitatory synapses; this function is dependent on kinase activity and may be exerted by the regulation of actomyosin contractility through the phosphorylation of myosin II regulatory light chain (MLC). Along with GIT1, positively regulates microtubule nucleation during interphase. Phosphorylates FXR1, promoting its localization to stress granules and activity. Phosphorylates ILK on 'Thr-173' and 'Ser-246', promoting nuclear export of ILK. This is Serine/threonine-protein kinase PAK 1 from Bos taurus (Bovine).